The sequence spans 72 residues: Protein LITTLE ZIPPER 4 (72 aa).

The stretch at Tyr14–Leu44 forms a coiled coil. The segment at Gln42–Gly72 is disordered. Residues Asn49–Gly72 are compositionally biased toward low complexity.

Interacts with REV.

Its function is as follows. Competitive inhibitor of the HD-ZIPIII transcription factors in shoot apical meristem (SAM) development. Acts by forming non-functional heterodimers. Part of a negative feedback loop. Essential for proper functioning of stem cells in the SAM. This chain is Protein LITTLE ZIPPER 4, found in Arabidopsis thaliana (Mouse-ear cress).